We begin with the raw amino-acid sequence, 416 residues long: Exodeoxyribonuclease 7 large subunit (416 aa).

The interval 1–21 is disordered; it reads MTEPDSKPKKGRAGRKKAEPV.

The protein belongs to the XseA family. In terms of assembly, heterooligomer composed of large and small subunits.

The protein resides in the cytoplasm. The enzyme catalyses Exonucleolytic cleavage in either 5'- to 3'- or 3'- to 5'-direction to yield nucleoside 5'-phosphates.. Bidirectionally degrades single-stranded DNA into large acid-insoluble oligonucleotides, which are then degraded further into small acid-soluble oligonucleotides. The protein is Exodeoxyribonuclease 7 large subunit of Deinococcus radiodurans (strain ATCC 13939 / DSM 20539 / JCM 16871 / CCUG 27074 / LMG 4051 / NBRC 15346 / NCIMB 9279 / VKM B-1422 / R1).